A 195-amino-acid chain; its full sequence is 3-isopropylmalate dehydratase small subunit (195 aa).

It belongs to the LeuD family. LeuD type 1 subfamily. As to quaternary structure, heterodimer of LeuC and LeuD.

The catalysed reaction is (2R,3S)-3-isopropylmalate = (2S)-2-isopropylmalate. Its pathway is amino-acid biosynthesis; L-leucine biosynthesis; L-leucine from 3-methyl-2-oxobutanoate: step 2/4. Catalyzes the isomerization between 2-isopropylmalate and 3-isopropylmalate, via the formation of 2-isopropylmaleate. The protein is 3-isopropylmalate dehydratase small subunit of Oenococcus oeni (strain ATCC BAA-331 / PSU-1).